Here is a 197-residue protein sequence, read N- to C-terminus: uncharacterized protein (197 aa).

This is an uncharacterized protein from Methanocaldococcus jannaschii (strain ATCC 43067 / DSM 2661 / JAL-1 / JCM 10045 / NBRC 100440) (Methanococcus jannaschii).